Here is a 227-residue protein sequence, read N- to C-terminus: Cytochrome c oxidase subunit 2 (227 aa).

The Mitochondrial intermembrane segment spans residues 1-26 (MATWSNLNLQNSSSPLMEQLIFFHDH). The helical transmembrane segment at 27–48 (TLMILLMITVLVAYIMSMLFFN) threads the bilayer. Residues 49-62 (LYTNRFLLEGQTIE) are Mitochondrial matrix-facing. The helical transmembrane segment at 63-82 (IIWTILPAITLIFIALPSLR) threads the bilayer. At 83 to 227 (LLYLLDESMD…FINWIKNYSS (145 aa)) the chain is on the mitochondrial intermembrane side. His-160, Cys-195, Glu-197, Cys-199, His-203, and Met-206 together coordinate Cu cation. Position 197 (Glu-197) interacts with Mg(2+).

The protein belongs to the cytochrome c oxidase subunit 2 family. In terms of assembly, component of the cytochrome c oxidase (complex IV, CIV), a multisubunit enzyme composed of a catalytic core of 3 subunits and several supernumerary subunits. The complex exists as a monomer or a dimer and forms supercomplexes (SCs) in the inner mitochondrial membrane with ubiquinol-cytochrome c oxidoreductase (cytochrome b-c1 complex, complex III, CIII). The cofactor is Cu cation.

The protein localises to the mitochondrion inner membrane. The enzyme catalyses 4 Fe(II)-[cytochrome c] + O2 + 8 H(+)(in) = 4 Fe(III)-[cytochrome c] + 2 H2O + 4 H(+)(out). In terms of biological role, component of the cytochrome c oxidase, the last enzyme in the mitochondrial electron transport chain which drives oxidative phosphorylation. The respiratory chain contains 3 multisubunit complexes succinate dehydrogenase (complex II, CII), ubiquinol-cytochrome c oxidoreductase (cytochrome b-c1 complex, complex III, CIII) and cytochrome c oxidase (complex IV, CIV), that cooperate to transfer electrons derived from NADH and succinate to molecular oxygen, creating an electrochemical gradient over the inner membrane that drives transmembrane transport and the ATP synthase. Cytochrome c oxidase is the component of the respiratory chain that catalyzes the reduction of oxygen to water. Electrons originating from reduced cytochrome c in the intermembrane space (IMS) are transferred via the dinuclear copper A center (CU(A)) of subunit 2 and heme A of subunit 1 to the active site in subunit 1, a binuclear center (BNC) formed by heme A3 and copper B (CU(B)). The BNC reduces molecular oxygen to 2 water molecules using 4 electrons from cytochrome c in the IMS and 4 protons from the mitochondrial matrix. The protein is Cytochrome c oxidase subunit 2 (COII) of Acheta domesticus (House cricket).